The sequence spans 149 residues: UPF0260 protein PSPPH_1551 (149 aa).

It belongs to the UPF0260 family.

The polypeptide is UPF0260 protein PSPPH_1551 (Pseudomonas savastanoi pv. phaseolicola (strain 1448A / Race 6) (Pseudomonas syringae pv. phaseolicola (strain 1448A / Race 6))).